Here is a 495-residue protein sequence, read N- to C-terminus: Glycerol kinase (495 aa).

Residue Thr-11 participates in ADP binding. Thr-11, Thr-12, and Ser-13 together coordinate ATP. Thr-11 contributes to the sn-glycerol 3-phosphate binding site. Arg-15 is a binding site for ADP. Positions 81, 82, 133, and 242 each coordinate sn-glycerol 3-phosphate. The glycerol site is built by Arg-81, Glu-82, Tyr-133, Asp-242, and Gln-243. ADP contacts are provided by Thr-264 and Gly-307. Thr-264, Gly-307, Gln-311, and Gly-408 together coordinate ATP. Residue Gly-408 participates in ADP binding.

The protein belongs to the FGGY kinase family.

It catalyses the reaction glycerol + ATP = sn-glycerol 3-phosphate + ADP + H(+). Its pathway is polyol metabolism; glycerol degradation via glycerol kinase pathway; sn-glycerol 3-phosphate from glycerol: step 1/1. Inhibited by fructose 1,6-bisphosphate (FBP). Functionally, key enzyme in the regulation of glycerol uptake and metabolism. Catalyzes the phosphorylation of glycerol to yield sn-glycerol 3-phosphate. The sequence is that of Glycerol kinase from Geobacter sp. (strain M21).